The sequence spans 925 residues: ETO1-like protein 2 (925 aa).

A BTB domain is found at 207–307 (SDISFCVGSE…ECEARLAASV (101 aa)). Residues 409–442 (ALSLHQMGCVLFERKDYKAAQFHFRLASSLGHVY) form a TPR 1 repeat. Positions 509–533 (KYRAVMKFEQKQIKEAFQEIDRLIQ) form a coiled coil. TPR repeat units lie at residues 538-571 (PECLELRAWLYLATGDRESCLRDLRAVLSLEPNY), 664-697 (AERLVYEGWLLYDMGYVEETLTKAEEAISIQRSF), 738-771 (GQALNNLGSIYINLGMLDQAETAYKNAIEIKHIR), 773-803 (RQGLARVYFLKNQRKEACEEMTKLIEKSCSK), 834-867 (TYPYRYRAAVLMDDQRETEAVEELSKAIAFRPEL), and 869-900 (TLHLRAAFHEATGNLSLATQDCEAALCLDPNH).

Belongs to the ETO1 family. As to quaternary structure, interacts with the C-terminal domain of ACS5. As to expression, constitutively expressed in green and etiolated seedlings.

It participates in protein modification; protein ubiquitination. In terms of biological role, potential regulator of the ethylene pathway, which acts by regulating the stability of 1-aminocyclopropane-1-carboxylate synthase (ACS) enzymes. May act as a substrate-specific adapter that connects ACS enzymes, such as ACS5, to ubiquitin ligase complexes, leading to proteasomal degradation of ACS enzymes. The protein is ETO1-like protein 2 (EOL2) of Arabidopsis thaliana (Mouse-ear cress).